A 386-amino-acid chain; its full sequence is 8-amino-7-oxononanoate synthase (386 aa).

Arg26 lines the substrate pocket. 104–105 (GY) provides a ligand contact to pyridoxal 5'-phosphate. His129 lines the substrate pocket. Residues Ser176, His204, and Thr232 each coordinate pyridoxal 5'-phosphate. Lys235 carries the post-translational modification N6-(pyridoxal phosphate)lysine. Residue Thr349 participates in substrate binding.

The protein belongs to the class-II pyridoxal-phosphate-dependent aminotransferase family. BioF subfamily. As to quaternary structure, homodimer. The cofactor is pyridoxal 5'-phosphate.

The enzyme catalyses 6-carboxyhexanoyl-[ACP] + L-alanine + H(+) = (8S)-8-amino-7-oxononanoate + holo-[ACP] + CO2. Its pathway is cofactor biosynthesis; biotin biosynthesis. Catalyzes the decarboxylative condensation of pimeloyl-[acyl-carrier protein] and L-alanine to produce 8-amino-7-oxononanoate (AON), [acyl-carrier protein], and carbon dioxide. The chain is 8-amino-7-oxononanoate synthase from Chromohalobacter salexigens (strain ATCC BAA-138 / DSM 3043 / CIP 106854 / NCIMB 13768 / 1H11).